A 311-amino-acid chain; its full sequence is Methionyl-tRNA formyltransferase (311 aa).

The segment at 33–52 (RPDRPAGRGRHQRSSPVREL) is disordered. 110–113 (SLLP) lines the (6S)-5,6,7,8-tetrahydrofolate pocket.

It belongs to the Fmt family.

The enzyme catalyses L-methionyl-tRNA(fMet) + (6R)-10-formyltetrahydrofolate = N-formyl-L-methionyl-tRNA(fMet) + (6S)-5,6,7,8-tetrahydrofolate + H(+). Functionally, attaches a formyl group to the free amino group of methionyl-tRNA(fMet). The formyl group appears to play a dual role in the initiator identity of N-formylmethionyl-tRNA by promoting its recognition by IF2 and preventing the misappropriation of this tRNA by the elongation apparatus. This is Methionyl-tRNA formyltransferase from Parafrankia sp. (strain EAN1pec).